The sequence spans 205 residues: Large ribosomal subunit protein uL4 (205 aa).

The segment covering 43-60 (ARSGNRAQQTRAEVSAST) has biased composition (polar residues). Residues 43-96 (ARSGNRAQQTRAEVSASTHKPWRQKGTGRARSGRASSPIWRGGGVTFPNKPNEN) form a disordered region. Over residues 62–74 (KPWRQKGTGRARS) the composition is skewed to basic residues.

It belongs to the universal ribosomal protein uL4 family. In terms of assembly, part of the 50S ribosomal subunit.

One of the primary rRNA binding proteins, this protein initially binds near the 5'-end of the 23S rRNA. It is important during the early stages of 50S assembly. It makes multiple contacts with different domains of the 23S rRNA in the assembled 50S subunit and ribosome. Its function is as follows. Forms part of the polypeptide exit tunnel. The sequence is that of Large ribosomal subunit protein uL4 from Thiobacillus denitrificans (strain ATCC 25259 / T1).